Reading from the N-terminus, the 908-residue chain is 26S proteasome non-ATPase regulatory subunit 2 (908 aa).

Met-1 carries the N-acetylmethionine modification. Residues 1-52 (MEEGGRDKAPLQPQQPPATSPGSGDEKPSGKERRDAGDKDKEQELSEEDKQL) are disordered. Residues 24 to 52 (GDEKPSGKERRDAGDKDKEQELSEEDKQL) show a composition bias toward basic and acidic residues. Phosphoserine occurs at positions 29 and 147. Phosphotyrosine is present on Tyr-194. Ser-361 and Ser-363 each carry phosphoserine. PC repeat units lie at residues 409-442 (SAAA…YIKS), 443-479 (GALL…TMRL), 480-514 (GSIF…SMEV), 517-551 (VTAL…TELK), and 560-589 (LGLG…PFRS). An N6-acetyllysine modification is found at Lys-551. Residues 623-643 (KEKEEDKDKKEKKDKDKKEAP) are compositionally biased toward basic and acidic residues. Residues 623–645 (KEKEEDKDKKEKKDKDKKEAPAD) form a disordered region. 2 PC repeats span residues 692–723 (LALA…EVSY) and 742–757 (AAML…KDPN). The tract at residues 708 to 903 (DTLSKFSHDA…LEGFVILRKN (196 aa)) is required for interaction with UBLCP1.

The protein belongs to the proteasome subunit S2 family. As to quaternary structure, component of the 19S proteasome regulatory particle complex. The 26S proteasome consists of a 20S core particle (CP) and two 19S regulatory subunits (RP). The regulatory particle is made of a lid composed of 9 subunits, a base containing 6 ATPases and few additional components including PSMD2. Interacts with RPGRIP1L. Interacts with CRY1 in a KDM8-dependent manner. Interacts (via C-terminus) with phosphatase UBLCP1 (via ubiquitin-like domain); the interaction recruits UBLCP1 to the 19S regulatory particle where it dephosphorylates 19S subunit PSMC2/RPT1 which impairs PSMC2 ATPase activity and disrupts 26S proteasome assembly.

Component of the 26S proteasome, a multiprotein complex involved in the ATP-dependent degradation of ubiquitinated proteins. This complex plays a key role in the maintenance of protein homeostasis by removing misfolded or damaged proteins, which could impair cellular functions, and by removing proteins whose functions are no longer required. Therefore, the proteasome participates in numerous cellular processes, including cell cycle progression, apoptosis, or DNA damage repair. Its function is as follows. Binds to the intracellular domain of tumor necrosis factor type 1 receptor. The binding domain of TRAP1 and TRAP2 resides outside the death domain of TNFR1. This is 26S proteasome non-ATPase regulatory subunit 2 (PSMD2) from Bos taurus (Bovine).